The following is a 188-amino-acid chain: Probable thymidylate kinase (188 aa).

11-18 serves as a coordination point for ATP; the sequence is GIDGSGKT.

It belongs to the thymidylate kinase family.

The enzyme catalyses dTMP + ATP = dTDP + ADP. The protein is Probable thymidylate kinase (tmk) of Methanocaldococcus jannaschii (strain ATCC 43067 / DSM 2661 / JAL-1 / JCM 10045 / NBRC 100440) (Methanococcus jannaschii).